The following is a 472-amino-acid chain: L-aspartate oxidase (472 aa).

FAD-binding positions include 7–10 (SGIA), Ser-29, 36–37 (ST), 42–43 (GG), and Asp-191. Arg-257 acts as the Proton donor/acceptor in catalysis. Residues Glu-337 and 353 to 354 (SL) contribute to the FAD site.

Belongs to the FAD-dependent oxidoreductase 2 family. NadB subfamily. In terms of assembly, monomer. FAD is required as a cofactor.

The protein resides in the cytoplasm. The enzyme catalyses L-aspartate + O2 = iminosuccinate + H2O2. It functions in the pathway cofactor biosynthesis; NAD(+) biosynthesis; iminoaspartate from L-aspartate (oxidase route): step 1/1. Catalyzes the oxidation of L-aspartate to iminoaspartate, the first step in the de novo biosynthesis of NAD(+). Can also use L-asparagine, but not L-phenylalanine, L-glutamate, glycine, L-proline, L-alanine and D-aspartate. The polypeptide is L-aspartate oxidase (Sulfurisphaera tokodaii (strain DSM 16993 / JCM 10545 / NBRC 100140 / 7) (Sulfolobus tokodaii)).